The primary structure comprises 28 residues: Basic phospholipase A2 homolog BmatTX-II (28 aa).

Monomer. Expressed by the venom gland.

Its subcellular location is the secreted. In terms of biological role, snake venom phospholipase A2 homolog that lacks enzymatic activity. Shows high myotoxic activity, neutrophil activation (demonstrated by activation induction of IL-1beta production), and slight cytotoxicity against Jurkat (leukemia T) and SK-BR-3 (breast adenocarcinoma) tumor cell lines. A model of myotoxic mechanism has been proposed: an apo Lys49-PLA2 is activated by the entrance of a hydrophobic molecule (e.g. fatty acid) at the hydrophobic channel of the protein leading to a reorientation of a monomer. This reorientation causes a transition between 'inactive' to 'active' states, causing alignment of C-terminal and membrane-docking sites (MDoS) side-by-side and putting the membrane-disruption sites (MDiS) in the same plane, exposed to solvent and in a symmetric position for both monomers. The MDoS region stabilizes the toxin on membrane by the interaction of charged residues with phospholipid head groups. Subsequently, the MDiS region destabilizes the membrane with penetration of hydrophobic residues. This insertion causes a disorganization of the membrane, allowing an uncontrolled influx of ions (i.e. calcium and sodium), and eventually triggering irreversible intracellular alterations and cell death. This chain is Basic phospholipase A2 homolog BmatTX-II, found in Bothrops mattogrossensis (Pitviper).